The sequence spans 328 residues: Ferredoxin--NADP reductase (328 aa).

Positions 14, 33, 41, 46, 90, and 126 each coordinate FAD.

It belongs to the ferredoxin--NADP reductase type 2 family. As to quaternary structure, homodimer. The cofactor is FAD.

The catalysed reaction is 2 reduced [2Fe-2S]-[ferredoxin] + NADP(+) + H(+) = 2 oxidized [2Fe-2S]-[ferredoxin] + NADPH. In Mycoplasmoides gallisepticum (strain R(low / passage 15 / clone 2)) (Mycoplasma gallisepticum), this protein is Ferredoxin--NADP reductase.